The following is a 676-amino-acid chain: Methionine--tRNA ligase (676 aa).

A 'HIGH' region motif is present at residues 15–25; the sequence is PYANGPIHLGH. Zn(2+) contacts are provided by C146, C149, C159, and C162. The 'KMSKS' region signature appears at 332–336; it reads KMSKS. ATP is bound at residue K335. Positions 575–676 constitute a tRNA-binding domain; the sequence is DFAKIDLRIA…EGAQPGMRVK (102 aa).

The protein belongs to the class-I aminoacyl-tRNA synthetase family. MetG type 1 subfamily. In terms of assembly, homodimer. Requires Zn(2+) as cofactor.

Its subcellular location is the cytoplasm. It catalyses the reaction tRNA(Met) + L-methionine + ATP = L-methionyl-tRNA(Met) + AMP + diphosphate. Functionally, is required not only for elongation of protein synthesis but also for the initiation of all mRNA translation through initiator tRNA(fMet) aminoacylation. This Shewanella sp. (strain ANA-3) protein is Methionine--tRNA ligase.